Here is a 29-residue protein sequence, read N- to C-terminus: Orphan peptide CllNtx (29 aa).

Contains 3 disulfide bonds. Expressed by the venom gland.

The protein resides in the secreted. Functionally, may act as a toxin. This Centruroides limpidus (Mexican scorpion) protein is Orphan peptide CllNtx.